The following is a 1026-amino-acid chain: Multidrug resistance protein MdtC (1026 aa).

The next 11 membrane-spanning stretches (helical) occupy residues 15 to 35, 333 to 353, 360 to 380, 387 to 407, 431 to 451, 463 to 483, 528 to 548, 853 to 873, 897 to 917, 953 to 973, and 984 to 1004; these read ILIA…LPVA, EVEE…FLFL, LIPA…MYLC, LSLM…IVVL, VGFT…PLLL, FAVT…TLTP, LVGV…IAIP, LILI…LYES, LFNA…IGIV, PIMM…LSGG, and ITIV…TPVV.

Belongs to the resistance-nodulation-cell division (RND) (TC 2.A.6) family. MdtC subfamily. Part of a tripartite efflux system composed of MdtA, MdtB and MdtC. MdtC forms a heteromultimer with MdtB.

It is found in the cell inner membrane. This chain is Multidrug resistance protein MdtC, found in Salmonella enteritidis PT4 (strain P125109).